We begin with the raw amino-acid sequence, 107 residues long: Essential MCU regulator, mitochondrial (107 aa).

Residues 1–52 constitute a mitochondrion transit peptide; sequence MASGAARWLVLAPVRSGALRSGPSLRKDGDVSAAWSGSGRSLVPSRSVIVTR. Residues 1 to 52 are interaction with MAIP1; that stretch reads MASGAARWLVLAPVRSGALRSGPSLRKDGDVSAAWSGSGRSLVPSRSVIVTR. Residues 54 to 65 are Mitochondrial matrix-facing; sequence GAILPKPVKMSF. A helical membrane pass occupies residues 66 to 85; it reads GLLRVFSIVIPFLYVGTLIS. The short motif at 81–85 is the GXXXX[G/A/S] element; it reads GTLIS. At 86–107 the chain is on the mitochondrial intermembrane side; the sequence is KNFAALLEEHDIFVPEDDDDDD.

It belongs to the SMDT1/EMRE family. Component of the uniplex complex, composed of MCU, EMRE/SMDT1, MICU1 and MICU2 (or MICU3) in a 4:4:1:1 stoichiometry. The number of EMRE/SMDT1 molecules is hovewer variable, ranging from 1 to 4 copies per uniplex complex, leading to uniplex complexes with distinct gatekeeping profiles. Interacts (via its C-terminal poly-Asp tail) with MCUR1; the interaction is direct. Unprocessed form interacts (via transit peptide) with MAIP1. Undergoes proteolytic degradation in neurons: degraded by AFG3L2 and SPG7 before SMDT1/EMRE assembly with the uniporter complex, limiting the availability of SMDT1/EMRE for MCU assembly and promoting efficient assembly of gatekeeper subunits with MCU.

It is found in the mitochondrion inner membrane. Essential regulatory subunit of the mitochondrial calcium uniporter complex (uniplex), a complex that mediates calcium uptake into mitochondria. Required to bridge the calcium-sensing proteins MICU1 with the calcium-conducting subunit MCU. Acts by mediating activation of MCU and retention of MICU1 to the MCU pore, in order to ensure tight regulation of the uniplex complex and appropriate responses to intracellular calcium signaling. This is Essential MCU regulator, mitochondrial from Homo sapiens (Human).